Here is a 114-residue protein sequence, read N- to C-terminus: Translation initiation factor 1A (114 aa).

The region spanning 19 to 91 (SEFRLPGEGE…EKGDIVHKYE (73 aa)) is the S1-like domain.

This sequence belongs to the eIF-1A family.

Functionally, seems to be required for maximal rate of protein biosynthesis. Enhances ribosome dissociation into subunits and stabilizes the binding of the initiator Met-tRNA(I) to 40 S ribosomal subunits. In Pyrobaculum aerophilum (strain ATCC 51768 / DSM 7523 / JCM 9630 / CIP 104966 / NBRC 100827 / IM2), this protein is Translation initiation factor 1A (eIF1A).